The sequence spans 327 residues: GMP reductase (327 aa).

Cys175 functions as the Thioimidate intermediate in the catalytic mechanism. Ile204–Val227 is an NADP(+) binding site.

This sequence belongs to the IMPDH/GMPR family. GuaC type 2 subfamily.

The catalysed reaction is IMP + NH4(+) + NADP(+) = GMP + NADPH + 2 H(+). In terms of biological role, catalyzes the irreversible NADPH-dependent deamination of GMP to IMP. It functions in the conversion of nucleobase, nucleoside and nucleotide derivatives of G to A nucleotides, and in maintaining the intracellular balance of A and G nucleotides. The protein is GMP reductase of Bacillus thuringiensis subsp. konkukian (strain 97-27).